Reading from the N-terminus, the 77-residue chain is Small ribosomal subunit protein bS21 (77 aa).

Belongs to the bacterial ribosomal protein bS21 family.

The protein is Small ribosomal subunit protein bS21 of Methylococcus capsulatus (strain ATCC 33009 / NCIMB 11132 / Bath).